The primary structure comprises 507 residues: Steroid (22S)-hydroxylase (507 aa).

Residues 12-32 traverse the membrane as a helical segment; sequence LLFFLPYILLALLTFYTTTVA. Cysteine 444 provides a ligand contact to heme.

This sequence belongs to the cytochrome P450 family. Heme is required as a cofactor.

The protein resides in the membrane. The enzyme catalyses a C27-steroid + reduced [NADPH--hemoprotein reductase] + O2 = a (22S)-22-hydroxy C27-steroid + oxidized [NADPH--hemoprotein reductase] + H2O + H(+). The catalysed reaction is a C28-steroid + reduced [NADPH--hemoprotein reductase] + O2 = a (22S)-22-hydroxy C28-steroid + oxidized [NADPH--hemoprotein reductase] + H2O + H(+). It carries out the reaction campesterol + reduced [NADPH--hemoprotein reductase] + O2 = (22S)-22-hydroxycampesterol + oxidized [NADPH--hemoprotein reductase] + H2O + H(+). It catalyses the reaction campestanol + reduced [NADPH--hemoprotein reductase] + O2 = 6-deoxycathasterone + oxidized [NADPH--hemoprotein reductase] + H2O + H(+). Its pathway is plant hormone biosynthesis; brassinosteroid biosynthesis. Its function is as follows. Involved in reduction steps of the biosynthesis of plant campesterol-derivative steroids, ending to castasterone (CS) but missing brassinolide (BL). Catalyzes the conversion of campesterol (CR) to (22S)-22-hydroxycampesterol (22-OHCR, 22-hydroxyCR) and of campestanol (CN) to 6-deoxycathasterone (6-deoxoCT). This is Steroid (22S)-hydroxylase from Brachypodium distachyon (Purple false brome).